The following is a 397-amino-acid chain: 8-amino-7-oxononanoate synthase (397 aa).

Arginine 21 contributes to the substrate binding site. Position 110-111 (110-111 (GY)) interacts with pyridoxal 5'-phosphate. Histidine 135 contacts substrate. Positions 181, 209, and 238 each coordinate pyridoxal 5'-phosphate. The residue at position 241 (lysine 241) is an N6-(pyridoxal phosphate)lysine. Threonine 355 serves as a coordination point for substrate.

Belongs to the class-II pyridoxal-phosphate-dependent aminotransferase family. BioF subfamily. As to quaternary structure, homodimer. Requires pyridoxal 5'-phosphate as cofactor.

The enzyme catalyses 6-carboxyhexanoyl-[ACP] + L-alanine + H(+) = (8S)-8-amino-7-oxononanoate + holo-[ACP] + CO2. The protein operates within cofactor biosynthesis; biotin biosynthesis. In terms of biological role, catalyzes the decarboxylative condensation of pimeloyl-[acyl-carrier protein] and L-alanine to produce 8-amino-7-oxononanoate (AON), [acyl-carrier protein], and carbon dioxide. The sequence is that of 8-amino-7-oxononanoate synthase from Saccharophagus degradans (strain 2-40 / ATCC 43961 / DSM 17024).